The chain runs to 623 residues: Myosin light chain kinase 2, skeletal/cardiac muscle (623 aa).

Disordered regions lie at residues 1–179 (MATE…PSCP) and 204–251 (GVPV…QGDT). A2 carries the N-acetylalanine modification. Low complexity predominate over residues 20–31 (APKAAAGEGPPA). Composition is skewed to basic and acidic residues over residues 32 to 43 (AEKDPGPPDPQK) and 49 to 89 (DPEK…EKGD). Residues 90-102 (GASAQPSASSQGP) are compositionally biased toward low complexity. A compositionally biased stretch (basic and acidic residues) spans 150-159 (GEAKEQKKVA). 3 positions are modified to phosphoserine: S169, S175, and S177. The segment covering 204–214 (GVPVTPGPTET) has biased composition (low complexity). A compositionally biased stretch (basic and acidic residues) spans 215 to 224 (EPAKVAEGEK). The Protein kinase domain maps to 312–567 (LNSKEALGGG…AAQCLAHPWL (256 aa)). Residues 318–326 (LGGGKFGAV) and K341 each bind ATP. The active-site Proton acceptor is D433. T472 is subject to Phosphothreonine. A calmodulin-binding region spans residues 601 to 613 (IAVSAANRFKKIS).

This sequence belongs to the protein kinase superfamily. CAMK Ser/Thr protein kinase family. As to quaternary structure, may interact with centrin.

The protein resides in the cytoplasm. It carries out the reaction L-seryl-[myosin light chain] + ATP = O-phospho-L-seryl-[myosin light chain] + ADP + H(+). It catalyses the reaction L-threonyl-[myosin light chain] + ATP = O-phospho-L-threonyl-[myosin light chain] + ADP + H(+). Its function is as follows. Implicated in the level of global muscle contraction and cardiac function. Phosphorylates a specific serine in the N-terminus of a myosin light chain. The polypeptide is Myosin light chain kinase 2, skeletal/cardiac muscle (MYLK2) (Bos taurus (Bovine)).